The sequence spans 236 residues: Pyridoxine 5'-phosphate synthase (236 aa).

3-amino-2-oxopropyl phosphate is bound at residue Asn-6. 8–9 (DH) provides a ligand contact to 1-deoxy-D-xylulose 5-phosphate. Residue Arg-17 participates in 3-amino-2-oxopropyl phosphate binding. The active-site Proton acceptor is the His-42. Positions 44 and 49 each coordinate 1-deoxy-D-xylulose 5-phosphate. Glu-69 serves as the catalytic Proton acceptor. Thr-99 provides a ligand contact to 1-deoxy-D-xylulose 5-phosphate. The active-site Proton donor is His-190. Residues Gly-191 and 212–213 (GH) contribute to the 3-amino-2-oxopropyl phosphate site.

It belongs to the PNP synthase family. Homooctamer; tetramer of dimers.

It is found in the cytoplasm. It carries out the reaction 3-amino-2-oxopropyl phosphate + 1-deoxy-D-xylulose 5-phosphate = pyridoxine 5'-phosphate + phosphate + 2 H2O + H(+). The protein operates within cofactor biosynthesis; pyridoxine 5'-phosphate biosynthesis; pyridoxine 5'-phosphate from D-erythrose 4-phosphate: step 5/5. In terms of biological role, catalyzes the complicated ring closure reaction between the two acyclic compounds 1-deoxy-D-xylulose-5-phosphate (DXP) and 3-amino-2-oxopropyl phosphate (1-amino-acetone-3-phosphate or AAP) to form pyridoxine 5'-phosphate (PNP) and inorganic phosphate. In Pelodictyon phaeoclathratiforme (strain DSM 5477 / BU-1), this protein is Pyridoxine 5'-phosphate synthase.